The following is an 880-amino-acid chain: Alanine--tRNA ligase (880 aa).

Positions 548, 552, 651, and 655 each coordinate Zn(2+).

The protein belongs to the class-II aminoacyl-tRNA synthetase family. The cofactor is Zn(2+).

It is found in the cytoplasm. It catalyses the reaction tRNA(Ala) + L-alanine + ATP = L-alanyl-tRNA(Ala) + AMP + diphosphate. In terms of biological role, catalyzes the attachment of alanine to tRNA(Ala) in a two-step reaction: alanine is first activated by ATP to form Ala-AMP and then transferred to the acceptor end of tRNA(Ala). Also edits incorrectly charged Ser-tRNA(Ala) and Gly-tRNA(Ala) via its editing domain. In Tropheryma whipplei (strain TW08/27) (Whipple's bacillus), this protein is Alanine--tRNA ligase.